The chain runs to 429 residues: High mobility group nucleosome-binding domain-containing protein 5 (429 aa).

The disordered stretch occupies residues 1–429; sequence MPKRKAAGDA…GEKGEPVSTV (429 aa). A Phosphothreonine modification is found at Thr-29. Residues 35–44 show a composition bias toward basic residues; the sequence is KRASTSRKTK. Lys-64 participates in a covalent cross-link: Glycyl lysine isopeptide (Lys-Gly) (interchain with G-Cter in SUMO2). A Phosphoserine modification is found at Ser-90. Basic and acidic residues-rich tracts occupy residues 92–101 and 109–124; these read METEEVKEQI and GGEKKEAVVTKGKNDE. Lys-98 is covalently cross-linked (Glycyl lysine isopeptide (Lys-Gly) (interchain with G-Cter in SUMO1); alternate). Lys-98 is covalently cross-linked (Glycyl lysine isopeptide (Lys-Gly) (interchain with G-Cter in SUMO2); alternate). Lys-121 participates in a covalent cross-link: Glycyl lysine isopeptide (Lys-Gly) (interchain with G-Cter in SUMO2). The span at 133-152 shows a compositional bias: acidic residues; sequence EKDEDEKEHEDTGEEGEDGE. Over residues 153–195 the composition is skewed to basic and acidic residues; sequence REGGLKEKPDVAEIEDAKEAKDDEEKEDKEKEDDKGGDGKKEE. Residues 196–209 are compositionally biased toward acidic residues; it reads EKDDEGEAETEEEV. Basic and acidic residues-rich tracts occupy residues 210 to 387 and 413 to 429; these read KEQQ…NEDR and NKDFKEDGEKGEPVSTV.

Belongs to the HMGN family. In terms of tissue distribution, expressed in trophoblast giant cells.

The protein resides in the nucleus. Functionally, preferentially binds to euchromatin and modulates cellular transcription by counteracting linker histone-mediated chromatin compaction. The chain is High mobility group nucleosome-binding domain-containing protein 5 from Rattus norvegicus (Rat).